Here is a 513-residue protein sequence, read N- to C-terminus: E3 ubiquitin-protein ligase RNF25 (513 aa).

The 109-residue stretch at Ser-9 to Ser-117 folds into the RWD domain. Positions 124, 127, 142, 144, 147, 150, 187, and 190 each coordinate Zn(2+). Residues Cys-124–Arg-191 form an RING-type; atypical zinc finger. Residues Asn-261–Leu-513 form a disordered region. Residues Ser-271–Gln-297 are compositionally biased toward low complexity. Composition is skewed to polar residues over residues Ser-345–Leu-397 and Glu-406–Leu-423. Over residues Gly-426–Gly-440 the composition is skewed to basic and acidic residues. The span at Ala-482–Gly-498 shows a compositional bias: gly residues. Over residues Gln-501–Leu-513 the composition is skewed to basic and acidic residues.

Belongs to the RNF25 family.

It is found in the cytoplasm. The catalysed reaction is S-ubiquitinyl-[E2 ubiquitin-conjugating enzyme]-L-cysteine + [acceptor protein]-L-lysine = [E2 ubiquitin-conjugating enzyme]-L-cysteine + N(6)-ubiquitinyl-[acceptor protein]-L-lysine.. Its pathway is protein modification; protein ubiquitination. Its function is as follows. E3 ubiquitin-protein ligase that plays a key role in the RNF14-RNF25 translation quality control pathway, a pathway that takes place when a ribosome has stalled during translation, and which promotes ubiquitination and degradation of translation factors on stalled ribosomes. May also acts as a positive regulator of the Wnt signaling. This Danio rerio (Zebrafish) protein is E3 ubiquitin-protein ligase RNF25.